The chain runs to 410 residues: Dual-specificity RNA methyltransferase RlmN (410 aa).

Glu123 functions as the Proton acceptor in the catalytic mechanism. Positions Glu129–Leu378 constitute a Radical SAM core domain. Cys136 and Cys381 are joined by a disulfide. The [4Fe-4S] cluster site is built by Cys143, Cys147, and Cys150. Residues Gly207–Glu208, Ser239, Ser261–His263, and Asn338 each bind S-adenosyl-L-methionine. Cys381 serves as the catalytic S-methylcysteine intermediate.

It belongs to the radical SAM superfamily. RlmN family. The cofactor is [4Fe-4S] cluster.

The protein resides in the cytoplasm. It carries out the reaction adenosine(2503) in 23S rRNA + 2 reduced [2Fe-2S]-[ferredoxin] + 2 S-adenosyl-L-methionine = 2-methyladenosine(2503) in 23S rRNA + 5'-deoxyadenosine + L-methionine + 2 oxidized [2Fe-2S]-[ferredoxin] + S-adenosyl-L-homocysteine. The enzyme catalyses adenosine(37) in tRNA + 2 reduced [2Fe-2S]-[ferredoxin] + 2 S-adenosyl-L-methionine = 2-methyladenosine(37) in tRNA + 5'-deoxyadenosine + L-methionine + 2 oxidized [2Fe-2S]-[ferredoxin] + S-adenosyl-L-homocysteine. Specifically methylates position 2 of adenine 2503 in 23S rRNA and position 2 of adenine 37 in tRNAs. m2A2503 modification seems to play a crucial role in the proofreading step occurring at the peptidyl transferase center and thus would serve to optimize ribosomal fidelity. The chain is Dual-specificity RNA methyltransferase RlmN from Mesorhizobium japonicum (strain LMG 29417 / CECT 9101 / MAFF 303099) (Mesorhizobium loti (strain MAFF 303099)).